The chain runs to 237 residues: MYNSMLPMFMCNNIVDDIDDIDDIDDIDDIDDIDDIDDKASNNDDHNYVYPLPENMVYRFNKSTNILDYLSTERDHVMMAVQYYMSKQRLDDLYRQLPTKTRSYIDIINMYCDKVNNDYNRDMNIMYDMASTESFTVYDINNEVNTILMDNKGLGVRLATISFITELGKRCMNPVETIKMFTLLSHTICDDCFIDYITDISPPDNTIPNISTREYLKLIGITAIMFATYKTLKYMIG.

Belongs to the orthopoxvirus OPG045 family. Interacts with host BAK1, BAX and BID.

It localises to the host mitochondrion outer membrane. It is found in the host cytoplasm. Plays a role in the inhibition of host apoptosis. Interacts with host BAX and thereby inhibits its activity. The sequence is that of Apoptosis regulator OPG045 (OPG045) from Homo sapiens (Human).